A 121-amino-acid polypeptide reads, in one-letter code: Large ribosomal subunit protein bL12 (121 aa).

Belongs to the bacterial ribosomal protein bL12 family. As to quaternary structure, homodimer. Part of the ribosomal stalk of the 50S ribosomal subunit. Forms a multimeric L10(L12)X complex, where L10 forms an elongated spine to which 2 to 4 L12 dimers bind in a sequential fashion. Binds GTP-bound translation factors.

Forms part of the ribosomal stalk which helps the ribosome interact with GTP-bound translation factors. Is thus essential for accurate translation. The polypeptide is Large ribosomal subunit protein bL12 (Vibrio cholerae serotype O1 (strain ATCC 39541 / Classical Ogawa 395 / O395)).